The primary structure comprises 244 residues: Thiol S-methyltransferase TMT1B (244 aa).

Positions 1–23 (MDVLVPLLQLLVLLLTLPLHLLA) are cleaved as a signal peptide.

The protein belongs to the methyltransferase superfamily. In terms of tissue distribution, highly expressed in liver and kidney. No expression in testis, heart, lung, brain, spleen or cultured fibroblasts.

It localises to the endoplasmic reticulum membrane. Its subcellular location is the lipid droplet. The protein localises to the microsome. It is found in the cytoplasm. The protein resides in the cytosol. The catalysed reaction is a thiol + S-adenosyl-L-methionine = a methyl thioether + S-adenosyl-L-homocysteine + H(+). In terms of biological role, thiol S-methyltransferase that catalyzes the transfer of a methyl group from S-adenosyl-L-methionine to alkyl and phenolic thiol-containing acceptor substrates. Together with TMT1B accounts for most of S-thiol methylation activity in the endoplasmic reticulum of hepatocytes. Selectively methylates S-centered nucleophiles from metabolites such as hydrogen sulfide and dithiothreitol. This chain is Thiol S-methyltransferase TMT1B (Tmt1b), found in Rattus norvegicus (Rat).